A 223-amino-acid polypeptide reads, in one-letter code: FAD-dependent monooxygenase imqC (223 aa).

FAD is bound by residues 139-141, tyrosine 189, and aspartate 210; that span reads RFY.

Belongs to the PheA/TfdB FAD monooxygenase family.

It participates in secondary metabolite biosynthesis. FAD-dependent monooxygenase; part of the gene cluster that mediates the biosynthesis of imizoquins A to D, tripeptide-derived alkaloids that serve a protective role against oxidative stress that are essential for normal germination. ImqB is a canonical three-module NRPS that assembles the tripeptide backbone of the imizoquins via condensation of Trp, Tyr, and Leu-derived precursors. N-methylation by imqF and phenol oxidation by imqC, followed by cyclization via the FAD-dependent oxidase imqH carry out the three-step transformation of L-tyrosine into tetrahydroisoquinoline. Importantly, this sequence requires the presence of a free amine in the tyrosine moiety, indicating that isoquinoline formation occurs prior to peptide bond formation. The imidazolidin-4-one ring of imizoquins could form following additional oxidation of the methyl-derived bridgehead carbon by imqH. Lastly, O-methylation by imqG and leucine hydroxylation by imqE complete biosynthesis of the imizoquins. The chain is FAD-dependent monooxygenase imqC from Aspergillus flavus (strain ATCC 200026 / FGSC A1120 / IAM 13836 / NRRL 3357 / JCM 12722 / SRRC 167).